A 585-amino-acid chain; its full sequence is Proline--tRNA ligase (585 aa).

This sequence belongs to the class-II aminoacyl-tRNA synthetase family. ProS type 1 subfamily. Homodimer.

Its subcellular location is the cytoplasm. The enzyme catalyses tRNA(Pro) + L-proline + ATP = L-prolyl-tRNA(Pro) + AMP + diphosphate. In terms of biological role, catalyzes the attachment of proline to tRNA(Pro) in a two-step reaction: proline is first activated by ATP to form Pro-AMP and then transferred to the acceptor end of tRNA(Pro). As ProRS can inadvertently accommodate and process non-cognate amino acids such as alanine and cysteine, to avoid such errors it has two additional distinct editing activities against alanine. One activity is designated as 'pretransfer' editing and involves the tRNA(Pro)-independent hydrolysis of activated Ala-AMP. The other activity is designated 'posttransfer' editing and involves deacylation of mischarged Ala-tRNA(Pro). The misacylated Cys-tRNA(Pro) is not edited by ProRS. The protein is Proline--tRNA ligase of Mycolicibacterium vanbaalenii (strain DSM 7251 / JCM 13017 / BCRC 16820 / KCTC 9966 / NRRL B-24157 / PYR-1) (Mycobacterium vanbaalenii).